A 206-amino-acid polypeptide reads, in one-letter code: Small ribosomal subunit protein uS4 (206 aa).

The interval 29 to 52 (LDKRPYAPGQHGQRRGRGRPSDYS) is disordered. In terms of domain architecture, S4 RNA-binding spans 96-171 (RRLDNVVFRM…QKRRRVSPWV (76 aa)).

Belongs to the universal ribosomal protein uS4 family. In terms of assembly, part of the 30S ribosomal subunit. Contacts protein S5. The interaction surface between S4 and S5 is involved in control of translational fidelity.

One of the primary rRNA binding proteins, it binds directly to 16S rRNA where it nucleates assembly of the body of the 30S subunit. Functionally, with S5 and S12 plays an important role in translational accuracy. This Deinococcus deserti (strain DSM 17065 / CIP 109153 / LMG 22923 / VCD115) protein is Small ribosomal subunit protein uS4.